We begin with the raw amino-acid sequence, 228 residues long: Octanoyltransferase (228 aa).

Positions 37 to 217 (AGGPDTLLLL…AVCDALDGRL (181 aa)) constitute a BPL/LPL catalytic domain. Substrate-binding positions include 75 to 82 (RGGKITWH), 147 to 149 (AIG), and 160 to 162 (GFA). The active-site Acyl-thioester intermediate is Cys178.

Belongs to the LipB family.

The protein localises to the cytoplasm. It catalyses the reaction octanoyl-[ACP] + L-lysyl-[protein] = N(6)-octanoyl-L-lysyl-[protein] + holo-[ACP] + H(+). The protein operates within protein modification; protein lipoylation via endogenous pathway; protein N(6)-(lipoyl)lysine from octanoyl-[acyl-carrier-protein]: step 1/2. Its function is as follows. Catalyzes the transfer of endogenously produced octanoic acid from octanoyl-acyl-carrier-protein onto the lipoyl domains of lipoate-dependent enzymes. Lipoyl-ACP can also act as a substrate although octanoyl-ACP is likely to be the physiological substrate. The sequence is that of Octanoyltransferase from Mycolicibacterium smegmatis (strain ATCC 700084 / mc(2)155) (Mycobacterium smegmatis).